The following is a 274-amino-acid chain: NADPH-dependent 7-cyano-7-deazaguanine reductase (274 aa).

80–82 (VES) serves as a coordination point for substrate. Residue 82 to 83 (SK) participates in NADPH binding. The Thioimide intermediate role is filled by Cys-181. Catalysis depends on Asp-188, which acts as the Proton donor. 220–221 (HE) serves as a coordination point for substrate. 249–250 (RG) contributes to the NADPH binding site.

This sequence belongs to the GTP cyclohydrolase I family. QueF type 2 subfamily. In terms of assembly, homodimer.

The protein resides in the cytoplasm. It carries out the reaction 7-aminomethyl-7-carbaguanine + 2 NADP(+) = 7-cyano-7-deazaguanine + 2 NADPH + 3 H(+). It participates in tRNA modification; tRNA-queuosine biosynthesis. Functionally, catalyzes the NADPH-dependent reduction of 7-cyano-7-deazaguanine (preQ0) to 7-aminomethyl-7-deazaguanine (preQ1). In Burkholderia mallei (strain NCTC 10247), this protein is NADPH-dependent 7-cyano-7-deazaguanine reductase.